The following is a 2703-amino-acid chain: Serine/arginine repetitive matrix protein 2 (2703 aa).

Position 1 is an N-acetylmethionine (M1). Residues 60–92 (HERKRRVELRCLELEEMMEEQGYEEQQIQEKVA) are a coiled coil. K101 is modified (N6-acetyllysine). Glycyl lysine isopeptide (Lys-Gly) (interchain with G-Cter in SUMO2) cross-links involve residues K108 and K130. Residues 141–1007 (ISDSYVDGSS…SGSFHLCPGV (867 aa)) are disordered. Y145 carries the post-translational modification Phosphotyrosine. K169 carries the N6-acetyllysine modification. Basic residues-rich tracts occupy residues 186 to 197 (KQKKKKKKKDRG) and 207 to 249 (RERK…KRSR). The sufficient for RNA-binding stretch occupies residues 197–259 (GRRSESSSPR…STTPAPKSRR (63 aa)). Phosphoserine is present on residues S220 and S222. The span at 263–284 (STSADSASSSDTSRSRSRSAAA) shows a compositional bias: low complexity. A phosphoserine mark is found at S295, S300, S310, S322, and S323. Residues 319 to 334 (QQPSSPAPSTKQSSSP) show a composition bias toward low complexity. The span at 335 to 345 (YEDKDKKEKSA) shows a compositional bias: basic and acidic residues. Phosphoserine occurs at positions 349, 351, 355, and 356. 2 positions are modified to phosphothreonine: T357 and T365. 20 positions are modified to phosphoserine: S375, S385, S393, S396, S402, S406, S422, S433, S434, S435, S438, S452, S482, S484, S503, S505, S507, S531, S533, and S540. Positions 383–396 (PSSQEPVNPSSEAS) are enriched in polar residues. The span at 425 to 437 (PTKGSRHASSSPE) shows a compositional bias: polar residues. A compositionally biased stretch (basic residues) spans 459-533 (NRSHGRAKRD…SPQRRGRSRS (75 aa)). Over residues 534 to 543 (PQRPGWSRSR) the composition is skewed to low complexity. Basic residues-rich tracts occupy residues 544-561 (NTQR…RSHS), 568-721 (GRSR…RRGR), and 730-740 (NKSRTSQRRSR). 3 positions are modified to phosphoserine: S700, S702, and S704. Residues S773, S775, and S778 each carry the phosphoserine modification. Over residues 785–817 (SQTPTRRSRSGSSPPKQKSKTPPRQSRSNSPQP) the composition is skewed to low complexity. 2 positions are modified to phosphoserine: S821 and S829. Polar residues-rich tracts occupy residues 829 to 851 (SVTN…SESS) and 859 to 874 (RTPS…PRVK). Phosphothreonine is present on residues T831 and T841. S846, S850, and S851 each carry phosphoserine. Low complexity-rich tracts occupy residues 875-891 (SSTP…SPQP) and 898-919 (SPRG…TSRT). Phosphoserine is present on residues S882, S909, S924, S926, S928, S940, S942, S944, S945, S946, and S949. At T955 the chain carries Phosphothreonine. A compositionally biased stretch (polar residues) spans 960-1000 (SGSTSPYLKSMLQTPPDQNLSGSKSPCPQKSRDSPTGSSGS). Phosphoserine is present on residues S962 and S964. Y966 bears the Phosphotyrosine mark. Phosphothreonine is present on T973. Phosphoserine occurs at positions 980, 984, and 993. The residue at position 995 (T995) is a Phosphothreonine. Phosphoserine is present on residues S997, S1000, S1011, S1037, and S1038. Polar residues predominate over residues 1024-1057 (VQQKGHTQTWPDTSSPEVMQTQVESPLLQSKSQT). Residues 1024–1112 (VQQKGHTQTW…TKPDSSIYPL (89 aa)) form a disordered region. T1044 carries the phosphothreonine modification. 5 positions are modified to phosphoserine: S1048, S1064, S1066, S1067, and S1068. A compositionally biased stretch (low complexity) spans 1058-1068 (SPKGSLSRSSS). At T1071 the chain carries Phosphothreonine. 27 positions are modified to phosphoserine: S1077, S1087, S1094, S1097, S1117, S1151, S1159, S1175, S1188, S1216, S1225, S1229, S1230, S1269, S1276, S1278, S1284, S1287, S1294, S1305, S1325, S1338, S1339, S1340, S1343, S1359, and S1360. Residues 1079-1092 (VKQDKSEISTDPKL) are compositionally biased toward basic and acidic residues. Residues 1136–2092 (IQEDVASSCI…RSPGMLEPLG (957 aa)) are disordered. Positions 1146–1158 (PRDKFSPTQDRPE) are enriched in basic and acidic residues. The segment covering 1270–1284 (PEHKELSHSPPRENS) has biased composition (basic and acidic residues). The segment covering 1285 to 1304 (FESSLEFKNSGPVSEVNTGF) has biased composition (polar residues). T1370 bears the Phosphothreonine mark. Positions 1371–1387 (PSRERSSSASPELKDGL) are enriched in basic and acidic residues. Residues S1372, S1378, and S1380 each carry the phosphoserine modification. Position 1390 is a phosphothreonine (T1390). Residues 1397-1408 (SGSSPGLRDGSG) are compositionally biased toward low complexity. 2 positions are modified to phosphoserine: S1400 and S1407. T1409 carries the phosphothreonine modification. Polar residues predominate over residues 1409–1431 (TPSRHSLSGSSPGMKDTPQTPSR). Residues S1414, S1416, S1418, and S1419 each carry the phosphoserine modification. At T1428 the chain carries Phosphothreonine. A phosphoserine mark is found at S1438 and S1439. Residue T1448 is modified to Phosphothreonine. Phosphoserine occurs at positions 1453, 1455, 1457, 1458, and 1465. Positions 1454 to 1468 (HSPSSPERNNKSVTP) are enriched in polar residues. Phosphothreonine is present on T1467. Residues S1473, S1475, S1477, and S1478 each carry the phosphoserine modification. Over residues 1475 to 1489 (SESSVEQKNLARTSP) the composition is skewed to polar residues. T1487 carries the post-translational modification Phosphothreonine. Positions 1490–1499 (GQRSRSGSSQ) are enriched in low complexity. S1493, S1495, S1497, S1498, and S1508 each carry phosphoserine. Basic and acidic residues predominate over residues 1511-1523 (ERSESDSSPDSKP). Basic residues predominate over residues 1524-1533 (KTRTPLRQRS). S1533, S1535, S1537, S1538, S1554, S1556, S1557, S1572, S1576, S1577, S1604, S1614, S1647, S1649, and S1650 each carry phosphoserine. Residues 1604 to 1613 (SPEGSSSSES) show a composition bias toward low complexity. Basic residues predominate over residues 1637–1647 (KSHTPPRRRSS). Phosphothreonine is present on T1654. A phosphoserine mark is found at S1683, S1685, S1687, S1688, S1718, and S1720. 2 stretches are compositionally biased toward basic residues: residues 1725–1745 (GLQR…RRRD) and 1754–1772 (SRRR…RRRG). 6 positions are modified to phosphoserine: S1774, S1778, S1810, S1813, S1832, and S1834. Residues 1776 to 1789 (YHSRSPTRQESSRT) are compositionally biased toward low complexity. Residues 1790–1810 (SSRRRRGRSRTPLTSRKRSRS) show a composition bias toward basic residues. Residues 1818–2020 (KRSRSRASPA…PRAARGKRSL (203 aa)) are compositionally biased toward basic residues. T1836 carries the phosphothreonine modification. Residues S1840 and S1846 each carry the phosphoserine modification. T1848 is subject to Phosphothreonine. Phosphoserine occurs at positions 1849, 1869, 1872, 1876, and 1878. Phosphothreonine is present on residues T1880 and T1884. Phosphoserine occurs at positions 1898 and 1900. 2 positions are modified to phosphothreonine: T1902 and T1906. S1910 and S1912 each carry phosphoserine. Residues T1914 and T1918 each carry the phosphothreonine modification. Phosphoserine is present on residues S1922, S1924, and S1927. T1930 is subject to Phosphothreonine. Residues S1936, S1939, S1948, S1951, S1960, S1963, S1970, and S1972 each carry the phosphoserine modification. At T1974 the chain carries Phosphothreonine. 2 positions are modified to phosphoserine: S1982 and S1984. Phosphothreonine is present on T1986. A phosphoserine mark is found at S1994, S1996, S1998, and S2019. At T2021 the chain carries Phosphothreonine. Residues 2022–2047 (RSPPAIRRRSASGSSSDRSRSATPPA) show a composition bias toward low complexity. A phosphoserine mark is found at S2023 and S2042. Phosphothreonine is present on T2044. Phosphoserine is present on residues S2052 and S2054. T2056 is modified (phosphothreonine). Residues 2062–2076 (SSSRMSCFSRPSMSP) show a composition bias toward low complexity. Phosphoserine occurs at positions 2070, 2073, 2075, and 2084. A Phosphothreonine modification is found at T2096. An omega-N-methylarginine mark is found at R2146, R2159, R2183, and R2198. Phosphoserine is present on S2224. Omega-N-methylarginine occurs at positions 2226 and 2240. A phosphothreonine mark is found at T2241 and T2254. Position 2262 is a phosphoserine (S2262). The disordered stretch occupies residues 2263-2703 (LTGSGTPPTA…SNRHRSSRSP (441 aa)). Residues T2268 and T2281 each carry the phosphothreonine modification. A compositionally biased stretch (polar residues) spans 2269 to 2283 (PPTAANYPSSSRTPQ). At R2295 the chain carries Omega-N-methylarginine. Residues S2296, S2321, and S2329 each carry the phosphoserine modification. Phosphothreonine is present on T2334. S2335 bears the Phosphoserine mark. R2337 carries the post-translational modification Asymmetric dimethylarginine; alternate. The residue at position 2337 (R2337) is an Omega-N-methylarginine; alternate. Phosphoserine occurs at positions 2347, 2351, and 2360. T2362 is subject to Phosphothreonine. Phosphoserine is present on residues S2365, S2368, S2381, S2384, S2404, and S2408. Composition is skewed to polar residues over residues 2410-2443 (FSDQ…SASD) and 2467-2476 (TGAQQPSTLA). The span at 2487 to 2521 (SSSSSSSSSSSSSSSSSSSSSSSSGSSSSDSEGSS) shows a compositional bias: low complexity. S2535 carries the post-translational modification Phosphoserine. T2537 carries the phosphothreonine modification. K2541 participates in a covalent cross-link: Glycyl lysine isopeptide (Lys-Gly) (interchain with G-Cter in SUMO2). T2553 is modified (phosphothreonine). A compositionally biased stretch (low complexity) spans 2562-2602 (SSSSSSSSSSSSSSSSSSSSSSSSSSSSSSSSSSSSSSSSS). Over residues 2605 to 2622 (PAKPGPQALPKPASPKKP) the composition is skewed to pro residues. 10 positions are modified to phosphoserine: S2618, S2629, S2631, S2638, S2642, S2644, S2646, S2648, S2656, and S2660. The segment covering 2623-2643 (PPGERRSRSPRKPIDSLRDSR) has biased composition (basic and acidic residues). A Phosphothreonine modification is found at T2689. S2691 bears the Phosphoserine mark. The span at 2694 to 2703 (SNRHRSSRSP) shows a compositional bias: basic residues.

Belongs to the CWC21 family. Component of pre-catalytic, catalytic and post-catalytic spliceosome complexes. Found in a pre-mRNA splicing complex with SFRS4, SFRS5, SNRP70, SNRPA1, SRRM1 and SRRM2. Component of the minor spliceosome, which splices U12-type introns. Interacts with DHX8. Interacts with CACTIN.

The protein resides in the nucleus. Its subcellular location is the nucleus speckle. Its function is as follows. Required for pre-mRNA splicing as component of the spliceosome. As a component of the minor spliceosome, involved in the splicing of U12-type introns in pre-mRNAs. The chain is Serine/arginine repetitive matrix protein 2 (Srrm2) from Mus musculus (Mouse).